Reading from the N-terminus, the 1400-residue chain is DNA-directed RNA polymerase subunit beta' (1400 aa).

Residues Cys-71, Cys-73, Cys-86, and Cys-89 each coordinate Zn(2+). Mg(2+) is bound by residues Asp-462, Asp-464, and Asp-466. The Zn(2+) site is built by Cys-820, Cys-893, Cys-900, and Cys-903.

Belongs to the RNA polymerase beta' chain family. In terms of assembly, the RNAP catalytic core consists of 2 alpha, 1 beta, 1 beta' and 1 omega subunit. When a sigma factor is associated with the core the holoenzyme is formed, which can initiate transcription. Mg(2+) is required as a cofactor. Requires Zn(2+) as cofactor.

The catalysed reaction is RNA(n) + a ribonucleoside 5'-triphosphate = RNA(n+1) + diphosphate. DNA-dependent RNA polymerase catalyzes the transcription of DNA into RNA using the four ribonucleoside triphosphates as substrates. The protein is DNA-directed RNA polymerase subunit beta' of Methylobacterium sp. (strain 4-46).